The chain runs to 216 residues: MFCFRKPSDSDIKQYINDRREEQFAYSNLYGTQDYATKEEYEMDPKYSNFDVDQVKIQLGTGVECFQKAVAALKQWKHFDLDWVDFYFKNTPIAVGETVGILSKQVGFWILSFARINYLYDGDQEDGSIKFGYSYGTLKDHVEKGEERFVIEWVRDPDGAPDKGAVYYEMLSFSEPSYWLSQLGYPVTRYFQNKFVVDSCNQMLKAVGSNQNVRHV.

It belongs to the UPF0548 family.

The sequence is that of UPF0548 protein from Dictyostelium discoideum (Social amoeba).